A 156-amino-acid polypeptide reads, in one-letter code: Ribosomal RNA large subunit methyltransferase H (156 aa).

S-adenosyl-L-methionine is bound by residues L73, G104, and 123–128 (ISSLTL).

The protein belongs to the RNA methyltransferase RlmH family. As to quaternary structure, homodimer.

The protein resides in the cytoplasm. It catalyses the reaction pseudouridine(1915) in 23S rRNA + S-adenosyl-L-methionine = N(3)-methylpseudouridine(1915) in 23S rRNA + S-adenosyl-L-homocysteine + H(+). Specifically methylates the pseudouridine at position 1915 (m3Psi1915) in 23S rRNA. This chain is Ribosomal RNA large subunit methyltransferase H, found in Herminiimonas arsenicoxydans.